A 355-amino-acid polypeptide reads, in one-letter code: UDP-N-acetylglucosamine--N-acetylmuramyl-(pentapeptide) pyrophosphoryl-undecaprenol N-acetylglucosamine transferase (355 aa).

UDP-N-acetyl-alpha-D-glucosamine-binding positions include 15–17 (TGG), Asn-127, Arg-163, Ser-191, Ile-244, 263–268 (ALTVSE), and Gln-288.

It belongs to the glycosyltransferase 28 family. MurG subfamily.

The protein localises to the cell inner membrane. The enzyme catalyses di-trans,octa-cis-undecaprenyl diphospho-N-acetyl-alpha-D-muramoyl-L-alanyl-D-glutamyl-meso-2,6-diaminopimeloyl-D-alanyl-D-alanine + UDP-N-acetyl-alpha-D-glucosamine = di-trans,octa-cis-undecaprenyl diphospho-[N-acetyl-alpha-D-glucosaminyl-(1-&gt;4)]-N-acetyl-alpha-D-muramoyl-L-alanyl-D-glutamyl-meso-2,6-diaminopimeloyl-D-alanyl-D-alanine + UDP + H(+). Its pathway is cell wall biogenesis; peptidoglycan biosynthesis. In terms of biological role, cell wall formation. Catalyzes the transfer of a GlcNAc subunit on undecaprenyl-pyrophosphoryl-MurNAc-pentapeptide (lipid intermediate I) to form undecaprenyl-pyrophosphoryl-MurNAc-(pentapeptide)GlcNAc (lipid intermediate II). This is UDP-N-acetylglucosamine--N-acetylmuramyl-(pentapeptide) pyrophosphoryl-undecaprenol N-acetylglucosamine transferase from Salmonella typhi.